The sequence spans 201 residues: MKVVAFERQQQGTGASRRLRNAGKTTGIVYGGEAAPQKIELDHNALWHALKKEAFHSSILDLEVAGQSQQVLLRDVQYHPFKQLVLHVDFQRVDAKKKLHTKAPLHFLNAEVSPAVKLSSAIVSHVATEIEIECLPADLPEFLEVDLSKIEAGQSLHAKDIALPKGVALVAHVDAENPVIASATVPAGAVSDAAEGETPAA.

The protein belongs to the bacterial ribosomal protein bL25 family. CTC subfamily. Part of the 50S ribosomal subunit; part of the 5S rRNA/L5/L18/L25 subcomplex. Contacts the 5S rRNA. Binds to the 5S rRNA independently of L5 and L18.

Functionally, this is one of the proteins that binds to the 5S RNA in the ribosome where it forms part of the central protuberance. This is Large ribosomal subunit protein bL25 from Burkholderia cenocepacia (strain HI2424).